Consider the following 306-residue polypeptide: Ribokinase (306 aa).

Substrate is bound by residues asparagine 12–aspartate 14, glycine 40–asparagine 44, and glutamate 141. ATP is bound by residues asparagine 185 and threonine 221–glycine 226. K(+) contacts are provided by aspartate 247 and threonine 249. ATP is bound at residue glycine 252–aspartate 253. Aspartate 253 is a binding site for substrate. Aspartate 253 (proton acceptor) is an active-site residue. K(+) contacts are provided by serine 283, lysine 286, glycine 288, and serine 292.

This sequence belongs to the carbohydrate kinase PfkB family. Ribokinase subfamily. Homodimer. The cofactor is Mg(2+).

It is found in the cytoplasm. The catalysed reaction is D-ribose + ATP = D-ribose 5-phosphate + ADP + H(+). It functions in the pathway carbohydrate metabolism; D-ribose degradation; D-ribose 5-phosphate from beta-D-ribopyranose: step 2/2. With respect to regulation, activated by a monovalent cation that binds near, but not in, the active site. The most likely occupant of the site in vivo is potassium. Ion binding induces a conformational change that may alter substrate affinity. Functionally, catalyzes the phosphorylation of ribose at O-5 in a reaction requiring ATP and magnesium. The resulting D-ribose-5-phosphate can then be used either for sythesis of nucleotides, histidine, and tryptophan, or as a component of the pentose phosphate pathway. This is Ribokinase from Haemophilus influenzae (strain ATCC 51907 / DSM 11121 / KW20 / Rd).